Consider the following 660-residue polypeptide: Bifunctional polymyxin resistance protein ArnA (660 aa).

The segment at 1–304 (MKTVVFAYHD…TLGLVQGSRL (304 aa)) is formyltransferase ArnAFT. 86–88 (HLI) contacts (6R)-10-formyltetrahydrofolate. H104 functions as the Proton donor; for formyltransferase activity in the catalytic mechanism. (6R)-10-formyltetrahydrofolate-binding positions include R114 and 136-140 (VTRAD). The tract at residues 314 to 660 (RRTRVLILGV…RTVDLTDKPS (347 aa)) is dehydrogenase ArnADH. NAD(+)-binding positions include D347 and 368 to 369 (DI). UDP-alpha-D-glucuronate is bound by residues A393, Y398, and 432–433 (TS). Catalysis depends on E434, which acts as the Proton acceptor; for decarboxylase activity. UDP-alpha-D-glucuronate is bound by residues R460, N492, 526–535 (KLIDGGKQKR), and Y613. R619 acts as the Proton donor; for decarboxylase activity in catalysis.

This sequence in the N-terminal section; belongs to the Fmt family. UDP-L-Ara4N formyltransferase subfamily. In the C-terminal section; belongs to the NAD(P)-dependent epimerase/dehydratase family. UDP-glucuronic acid decarboxylase subfamily. In terms of assembly, homohexamer, formed by a dimer of trimers.

The enzyme catalyses UDP-alpha-D-glucuronate + NAD(+) = UDP-beta-L-threo-pentopyranos-4-ulose + CO2 + NADH. The catalysed reaction is UDP-4-amino-4-deoxy-beta-L-arabinose + (6R)-10-formyltetrahydrofolate = UDP-4-deoxy-4-formamido-beta-L-arabinose + (6S)-5,6,7,8-tetrahydrofolate + H(+). Its pathway is nucleotide-sugar biosynthesis; UDP-4-deoxy-4-formamido-beta-L-arabinose biosynthesis; UDP-4-deoxy-4-formamido-beta-L-arabinose from UDP-alpha-D-glucuronate: step 1/3. It functions in the pathway nucleotide-sugar biosynthesis; UDP-4-deoxy-4-formamido-beta-L-arabinose biosynthesis; UDP-4-deoxy-4-formamido-beta-L-arabinose from UDP-alpha-D-glucuronate: step 3/3. It participates in bacterial outer membrane biogenesis; lipopolysaccharide biosynthesis. In terms of biological role, bifunctional enzyme that catalyzes the oxidative decarboxylation of UDP-glucuronic acid (UDP-GlcUA) to UDP-4-keto-arabinose (UDP-Ara4O) and the addition of a formyl group to UDP-4-amino-4-deoxy-L-arabinose (UDP-L-Ara4N) to form UDP-L-4-formamido-arabinose (UDP-L-Ara4FN). The modified arabinose is attached to lipid A and is required for resistance to polymyxin and cationic antimicrobial peptides. This is Bifunctional polymyxin resistance protein ArnA from Shigella dysenteriae serotype 1 (strain Sd197).